A 458-amino-acid chain; its full sequence is UPF0210 protein MmarC6_1246 (458 aa).

Belongs to the UPF0210 family.

The polypeptide is UPF0210 protein MmarC6_1246 (Methanococcus maripaludis (strain C6 / ATCC BAA-1332)).